A 270-amino-acid polypeptide reads, in one-letter code: uncharacterized protein (270 aa).

The region spanning C43 to H112 is the J domain. The interval E239–S270 is disordered. Residues K242–S251 are compositionally biased toward polar residues. Residues S252–S270 are compositionally biased toward pro residues.

This is an uncharacterized protein from Schizosaccharomyces pombe (strain 972 / ATCC 24843) (Fission yeast).